The sequence spans 185 residues: Ribosome-recycling factor (185 aa).

This sequence belongs to the RRF family.

The protein localises to the cytoplasm. Functionally, responsible for the release of ribosomes from messenger RNA at the termination of protein biosynthesis. May increase the efficiency of translation by recycling ribosomes from one round of translation to another. The protein is Ribosome-recycling factor of Streptomyces avermitilis (strain ATCC 31267 / DSM 46492 / JCM 5070 / NBRC 14893 / NCIMB 12804 / NRRL 8165 / MA-4680).